The following is a 451-amino-acid chain: UDP-N-acetylmuramoylalanine--D-glutamate ligase (451 aa).

ATP is bound at residue 119-125 (GSNGKTT).

The protein belongs to the MurCDEF family.

Its subcellular location is the cytoplasm. It carries out the reaction UDP-N-acetyl-alpha-D-muramoyl-L-alanine + D-glutamate + ATP = UDP-N-acetyl-alpha-D-muramoyl-L-alanyl-D-glutamate + ADP + phosphate + H(+). Its pathway is cell wall biogenesis; peptidoglycan biosynthesis. Its function is as follows. Cell wall formation. Catalyzes the addition of glutamate to the nucleotide precursor UDP-N-acetylmuramoyl-L-alanine (UMA). In Streptococcus mutans serotype c (strain ATCC 700610 / UA159), this protein is UDP-N-acetylmuramoylalanine--D-glutamate ligase.